Reading from the N-terminus, the 329-residue chain is MQGSVTEFLKPRLVDIEQVSPTRAKVTLEPLERGFGHTLGNALRRILLSSMPGCAVTEVEIDGVLHEYSSKEGVQEDILEILLNLKGLAVILEGKDEAMLTLSKSGAGPVTAADITHDGDVTIANPDHVICHLTGNHDISMRIRVERGRGYVPASARAQNEDDDRPIGRLLVDASFSPVARIAYNVEAARVEQRTDLDKLVIDMTTNGTIDPEEAIRRSATILAEQLDAFVELRDVSVPEQKEEKPEFDPILLRPVDDLELTVRSANCLKAEAIHYIGDLVQRTEVELLKTPNLGKKSLTEIKDVLASRGLSLGMRLENWPPASLADDL.

The alpha N-terminal domain (alpha-NTD) stretch occupies residues methionine 1–arginine 234. The alpha C-terminal domain (alpha-CTD) stretch occupies residues phenylalanine 248–leucine 329.

The protein belongs to the RNA polymerase alpha chain family. As to quaternary structure, homodimer. The RNAP catalytic core consists of 2 alpha, 1 beta, 1 beta' and 1 omega subunit. When a sigma factor is associated with the core the holoenzyme is formed, which can initiate transcription.

It carries out the reaction RNA(n) + a ribonucleoside 5'-triphosphate = RNA(n+1) + diphosphate. DNA-dependent RNA polymerase catalyzes the transcription of DNA into RNA using the four ribonucleoside triphosphates as substrates. In Shewanella amazonensis (strain ATCC BAA-1098 / SB2B), this protein is DNA-directed RNA polymerase subunit alpha.